The sequence spans 148 residues: Deoxyuridine 5'-triphosphate nucleotidohydrolase (148 aa).

Substrate is bound by residues 67-69, asparagine 80, 84-86, and methionine 94; these read RSG and LID.

This sequence belongs to the dUTPase family. Requires Mg(2+) as cofactor.

The enzyme catalyses dUTP + H2O = dUMP + diphosphate + H(+). The protein operates within pyrimidine metabolism; dUMP biosynthesis; dUMP from dCTP (dUTP route): step 2/2. Its function is as follows. This enzyme is involved in nucleotide metabolism: it produces dUMP, the immediate precursor of thymidine nucleotides and it decreases the intracellular concentration of dUTP so that uracil cannot be incorporated into DNA. The sequence is that of Deoxyuridine 5'-triphosphate nucleotidohydrolase from Francisella tularensis subsp. tularensis (strain FSC 198).